Here is an 850-residue protein sequence, read N- to C-terminus: Trimethylamine-N-oxide reductase (850 aa).

The segment at residues 1 to 39 (MKNKDSLHVSRRRFLAQLGGLTVAGMLGPSLLTPRSARA) is a signal peptide (tat-type signal). Ser-191 lines the Mo-bis(molybdopterin guanine dinucleotide) pocket.

Belongs to the prokaryotic molybdopterin-containing oxidoreductase family. It depends on Mo-bis(molybdopterin guanine dinucleotide) as a cofactor. In terms of processing, predicted to be exported by the Tat system. The position of the signal peptide cleavage has not been experimentally proven.

The protein localises to the periplasm. It catalyses the reaction trimethylamine + 2 Fe(III)-[cytochrome c] + H2O = trimethylamine N-oxide + 2 Fe(II)-[cytochrome c] + 3 H(+). Reduces trimethylamine-N-oxide (TMAO) into trimethylamine; an anaerobic reaction coupled to energy-yielding reactions. The polypeptide is Trimethylamine-N-oxide reductase (torA) (Salmonella typhimurium (strain LT2 / SGSC1412 / ATCC 700720)).